The chain runs to 704 residues: Acetyl-coenzyme A synthetase 1 (704 aa).

Residues 239 to 242 and Thr-358 contribute to the CoA site; that span reads RGGK. Residues 434–436, 458–463, Asp-550, and Arg-565 each bind ATP; these read GEP and DTYWQT. Ser-573 provides a ligand contact to CoA. Arg-576 provides a ligand contact to ATP. Arg-641 is a CoA binding site. The Microbody targeting signal signature appears at 702–704; it reads VKL.

Belongs to the ATP-dependent AMP-binding enzyme family.

The protein resides in the microsome. The protein localises to the endoplasmic reticulum. The catalysed reaction is acetate + ATP + CoA = acetyl-CoA + AMP + diphosphate. This is Acetyl-coenzyme A synthetase 1 (ACS1) from Candida glabrata (strain ATCC 2001 / BCRC 20586 / JCM 3761 / NBRC 0622 / NRRL Y-65 / CBS 138) (Yeast).